A 335-amino-acid chain; its full sequence is Aspartate--ammonia ligase (335 aa).

It belongs to the class-II aminoacyl-tRNA synthetase family. AsnA subfamily.

It is found in the cytoplasm. It catalyses the reaction L-aspartate + NH4(+) + ATP = L-asparagine + AMP + diphosphate + H(+). It functions in the pathway amino-acid biosynthesis; L-asparagine biosynthesis; L-asparagine from L-aspartate (ammonia route): step 1/1. The sequence is that of Aspartate--ammonia ligase from Pediococcus pentosaceus (strain ATCC 25745 / CCUG 21536 / LMG 10740 / 183-1w).